Consider the following 208-residue polypeptide: Urease accessory protein UreG (208 aa).

Residue 12 to 19 coordinates GTP; it reads GPVGAGKT.

It belongs to the SIMIBI class G3E GTPase family. UreG subfamily. As to quaternary structure, homodimer. UreD, UreF and UreG form a complex that acts as a GTP-hydrolysis-dependent molecular chaperone, activating the urease apoprotein by helping to assemble the nickel containing metallocenter of UreC. The UreE protein probably delivers the nickel.

It is found in the cytoplasm. Functionally, facilitates the functional incorporation of the urease nickel metallocenter. This process requires GTP hydrolysis, probably effectuated by UreG. The chain is Urease accessory protein UreG from Rhodobacter capsulatus (Rhodopseudomonas capsulata).